The sequence spans 98 residues: MEKMSHDPIAADIGTQVSDNALHGVTAGSTALTSVTGLVPAGADEVSAQAATAFTSEGIQLLASNASAQDQLHRAGEAVQDVARTYSQIDDGAAGVFA.

Residues 1–90 (MEKMSHDPIA…DVARTYSQID (90 aa)) form the PE domain.

This sequence belongs to the mycobacterial PE family. In terms of assembly, interacts with PPE68. PE35/PPE68 complex interacts with human TLR2.

Its subcellular location is the secreted. The protein localises to the cell surface. Its function is as follows. Plays a major role in RD1-associated pathogenesis, and may contribute to the establishment and maintenance of M.tuberculosis infection. Together with PPE68, stimulates the secretion of IL-10 and MCP-1 from human macrophages, via the interaction with human Toll-like receptor 2 (TLR2). This is PE family immunomodulator PE35 (PE35) from Mycobacterium tuberculosis (strain CDC 1551 / Oshkosh).